A 327-amino-acid polypeptide reads, in one-letter code: Phenylalanine--tRNA ligase alpha subunit (327 aa).

Glu252 is a binding site for Mg(2+).

This sequence belongs to the class-II aminoacyl-tRNA synthetase family. Phe-tRNA synthetase alpha subunit type 1 subfamily. In terms of assembly, tetramer of two alpha and two beta subunits. The cofactor is Mg(2+).

It localises to the cytoplasm. It carries out the reaction tRNA(Phe) + L-phenylalanine + ATP = L-phenylalanyl-tRNA(Phe) + AMP + diphosphate + H(+). This Sodalis glossinidius (strain morsitans) protein is Phenylalanine--tRNA ligase alpha subunit.